The primary structure comprises 753 residues: Catalase-peroxidase (753 aa).

The segment at residues W90–Y238 is a cross-link (tryptophyl-tyrosyl-methioninium (Trp-Tyr) (with M-264)). The Proton acceptor role is filled by H91. A disordered region spans residues S196–I220. Residues Y238–M264 constitute a cross-link (tryptophyl-tyrosyl-methioninium (Tyr-Met) (with W-90)). H279 is a binding site for heme b.

It belongs to the peroxidase family. Peroxidase/catalase subfamily. As to quaternary structure, homodimer or homotetramer. Heme b serves as cofactor. Formation of the three residue Trp-Tyr-Met cross-link is important for the catalase, but not the peroxidase activity of the enzyme.

Its subcellular location is the cytoplasm. The catalysed reaction is H2O2 + AH2 = A + 2 H2O. The enzyme catalyses 2 H2O2 = O2 + 2 H2O. Inhibited by KCN. Bifunctional enzyme with both catalase and broad-spectrum peroxidase activity. The polypeptide is Catalase-peroxidase (Neurospora crassa (strain ATCC 24698 / 74-OR23-1A / CBS 708.71 / DSM 1257 / FGSC 987)).